The following is a 365-amino-acid chain: Protein RecA (365 aa).

81-88 (GPESSGKT) contributes to the ATP binding site.

Belongs to the RecA family.

The protein localises to the cytoplasm. In terms of biological role, can catalyze the hydrolysis of ATP in the presence of single-stranded DNA, the ATP-dependent uptake of single-stranded DNA by duplex DNA, and the ATP-dependent hybridization of homologous single-stranded DNAs. It interacts with LexA causing its activation and leading to its autocatalytic cleavage. This Borreliella afzelii (strain PKo) (Borrelia afzelii) protein is Protein RecA.